A 147-amino-acid chain; its full sequence is Nucleoside diphosphate kinase (147 aa).

ATP is bound by residues K9, F57, R85, T91, R102, and N112. H115 serves as the catalytic Pros-phosphohistidine intermediate.

The protein belongs to the NDK family. In terms of assembly, homotetramer. It depends on Mg(2+) as a cofactor.

It localises to the cytoplasm. It carries out the reaction a 2'-deoxyribonucleoside 5'-diphosphate + ATP = a 2'-deoxyribonucleoside 5'-triphosphate + ADP. The catalysed reaction is a ribonucleoside 5'-diphosphate + ATP = a ribonucleoside 5'-triphosphate + ADP. Functionally, major role in the synthesis of nucleoside triphosphates other than ATP. The ATP gamma phosphate is transferred to the NDP beta phosphate via a ping-pong mechanism, using a phosphorylated active-site intermediate. This is Nucleoside diphosphate kinase from Listeria monocytogenes serotype 4b (strain F2365).